The primary structure comprises 1342 residues: DNA-directed RNA polymerase subunit beta (1342 aa).

This sequence belongs to the RNA polymerase beta chain family. The RNAP catalytic core consists of 2 alpha, 1 beta, 1 beta' and 1 omega subunit. When a sigma factor is associated with the core the holoenzyme is formed, which can initiate transcription.

It carries out the reaction RNA(n) + a ribonucleoside 5'-triphosphate = RNA(n+1) + diphosphate. Its function is as follows. DNA-dependent RNA polymerase catalyzes the transcription of DNA into RNA using the four ribonucleoside triphosphates as substrates. This chain is DNA-directed RNA polymerase subunit beta, found in Tolumonas auensis (strain DSM 9187 / NBRC 110442 / TA 4).